We begin with the raw amino-acid sequence, 242 residues long: DNA repair protein RecO (242 aa).

Belongs to the RecO family.

Functionally, involved in DNA repair and RecF pathway recombination. The protein is DNA repair protein RecO of Laribacter hongkongensis (strain HLHK9).